Reading from the N-terminus, the 286-residue chain is 33 kDa chaperonin (286 aa).

2 disulfide bridges follow: C225–C227 and C258–C261.

Belongs to the HSP33 family. Post-translationally, under oxidizing conditions two disulfide bonds are formed involving the reactive cysteines. Under reducing conditions zinc is bound to the reactive cysteines and the protein is inactive.

It is found in the cytoplasm. In terms of biological role, redox regulated molecular chaperone. Protects both thermally unfolding and oxidatively damaged proteins from irreversible aggregation. Plays an important role in the bacterial defense system toward oxidative stress. In Shewanella sp. (strain MR-4), this protein is 33 kDa chaperonin.